A 225-amino-acid chain; its full sequence is Urease accessory protein UreG 2 (225 aa).

31 to 38 provides a ligand contact to GTP; that stretch reads GPVGSGKT.

Belongs to the SIMIBI class G3E GTPase family. UreG subfamily. In terms of assembly, homodimer. UreD, UreF and UreG form a complex that acts as a GTP-hydrolysis-dependent molecular chaperone, activating the urease apoprotein by helping to assemble the nickel containing metallocenter of UreC. The UreE protein probably delivers the nickel.

It localises to the cytoplasm. Facilitates the functional incorporation of the urease nickel metallocenter. This process requires GTP hydrolysis, probably effectuated by UreG. This is Urease accessory protein UreG 2 from Streptomyces griseus subsp. griseus (strain JCM 4626 / CBS 651.72 / NBRC 13350 / KCC S-0626 / ISP 5235).